A 415-amino-acid polypeptide reads, in one-letter code: Esterase FrsA (415 aa).

It belongs to the FrsA family.

The enzyme catalyses a carboxylic ester + H2O = an alcohol + a carboxylate + H(+). Functionally, catalyzes the hydrolysis of esters. The polypeptide is Esterase FrsA (Yersinia enterocolitica serotype O:8 / biotype 1B (strain NCTC 13174 / 8081)).